Consider the following 562-residue polypeptide: MAADAFLLIFGLLLTVLIVAQPLGSGLARLIEGETGTLLQKFEAGTARLFALDTTEMRWQQYAAAILTLNLIGIVVLFVLLMAQGVLPLNPENMPGLSWHLALNTAISFVTNTNWQAYSGENTLSYLSQMVGLTVQNFLAAASGIAVAFALIRAFSRRCVDTLGNAWLDLFRITLYVLLPLSLLLALFFVSQGVLQNLLPYQHLTTLDGAAQTLPMGPVASQEAIKLLGTNGGGFFGANSAHPFENPTALSNIVQMLAILLIPTALCFAFGKAVSDNRQGHALLWAMGLIFIVAAAVVMKMEVIGNPHLLALGADSAANLEGKETRFGVLTSSLYAVVTTATSTGAVNAMHDSFTALGGMVPMWLMQIGEVVFGGVGSGLYGMLLFVLLTVFIAGLMIGRSPEYLGKKIEVYEMKMTALAILIPPALVLLGTALALSTEAGRSGILNPGAHGFSEVLYAVSSAANNNGSAFAGLSVNTPFYNVLLAVAMLLGRFAVMVPVLAIAGSLVVKKRQPESKGSLSTRSPLFIGMLIAIVLLIGALTFIPALALGPVAEHLQFGLTH.

12 helical membrane-spanning segments follow: residues 5–25 (AFLLIFGLLLTVLIVAQPLGS), 63–83 (AAAILTLNLIGIVVLFVLLMA), 132–152 (GLTVQNFLAAASGIAVAFALI), 175–195 (LYVLLPLSLLLALFFVSQGVL), 250–270 (LSNIVQMLAILLIPTALCFAF), 279–299 (QGHALLWAMGLIFIVAAAVVM), 327–347 (FGVLTSSLYAVVTTATSTGAV), 356–376 (ALGGMVPMWLMQIGEVVFGGV), 379–399 (GLYGMLLFVLLTVFIAGLMIG), 416–436 (MTALAILIPPALVLLGTALAL), 483–503 (VLLAVAMLLGRFAVMVPVLAI), and 526–546 (LFIGMLIAIVLLIGALTFIPA).

It belongs to the KdpA family. In terms of assembly, the system is composed of three essential subunits: KdpA, KdpB and KdpC.

Its subcellular location is the cell inner membrane. Part of the high-affinity ATP-driven potassium transport (or Kdp) system, which catalyzes the hydrolysis of ATP coupled with the electrogenic transport of potassium into the cytoplasm. This subunit binds the periplasmic potassium ions and delivers the ions to the membrane domain of KdpB through an intramembrane tunnel. This Pectobacterium carotovorum subsp. carotovorum (strain PC1) protein is Potassium-transporting ATPase potassium-binding subunit.